The primary structure comprises 130 residues: DNA-directed RNA polymerase subunit omega (130 aa).

The segment at 109–130 is disordered; it reads EEELLKGLEGLAPPEEQPEEDE.

Belongs to the RNA polymerase subunit omega family. As to quaternary structure, the RNAP catalytic core consists of 2 alpha, 1 beta, 1 beta' and 1 omega subunit. When a sigma factor is associated with the core the holoenzyme is formed, which can initiate transcription.

The enzyme catalyses RNA(n) + a ribonucleoside 5'-triphosphate = RNA(n+1) + diphosphate. Promotes RNA polymerase assembly. Latches the N- and C-terminal regions of the beta' subunit thereby facilitating its interaction with the beta and alpha subunits. The polypeptide is DNA-directed RNA polymerase subunit omega (Rhodopseudomonas palustris (strain BisA53)).